The sequence spans 299 residues: Phosphoribosylaminoimidazole-succinocarboxamide synthase (299 aa).

This sequence belongs to the SAICAR synthetase family.

It catalyses the reaction 5-amino-1-(5-phospho-D-ribosyl)imidazole-4-carboxylate + L-aspartate + ATP = (2S)-2-[5-amino-1-(5-phospho-beta-D-ribosyl)imidazole-4-carboxamido]succinate + ADP + phosphate + 2 H(+). It participates in purine metabolism; IMP biosynthesis via de novo pathway; 5-amino-1-(5-phospho-D-ribosyl)imidazole-4-carboxamide from 5-amino-1-(5-phospho-D-ribosyl)imidazole-4-carboxylate: step 1/2. The sequence is that of Phosphoribosylaminoimidazole-succinocarboxamide synthase from Maridesulfovibrio salexigens (strain ATCC 14822 / DSM 2638 / NCIMB 8403 / VKM B-1763) (Desulfovibrio salexigens).